The sequence spans 386 residues: Methionyl-tRNA formyltransferase, mitochondrial (386 aa).

The protein belongs to the Fmt family.

The protein resides in the mitochondrion. It carries out the reaction L-methionyl-tRNA(fMet) + (6R)-10-formyltetrahydrofolate = N-formyl-L-methionyl-tRNA(fMet) + (6S)-5,6,7,8-tetrahydrofolate + H(+). Methionyl-tRNA formyltransferase that formylates methionyl-tRNA in mitochondria and is crucial for translation initiation. The sequence is that of Methionyl-tRNA formyltransferase, mitochondrial (Mtfmt) from Mus musculus (Mouse).